The primary structure comprises 501 residues: 2,3-bisphosphoglycerate-independent phosphoglycerate mutase (501 aa).

The Mn(2+) site is built by Asp-12 and Ser-62. The active-site Phosphoserine intermediate is Ser-62. Residues His-121, 150–151 (RD), Arg-182, Arg-188, 253–256 (RSDR), and Lys-322 contribute to the substrate site. Mn(2+) contacts are provided by Asp-389, His-393, Asp-430, His-431, and His-449.

It belongs to the BPG-independent phosphoglycerate mutase family. In terms of assembly, monomer. Mn(2+) is required as a cofactor.

It carries out the reaction (2R)-2-phosphoglycerate = (2R)-3-phosphoglycerate. It functions in the pathway carbohydrate degradation; glycolysis; pyruvate from D-glyceraldehyde 3-phosphate: step 3/5. Functionally, catalyzes the interconversion of 2-phosphoglycerate and 3-phosphoglycerate. The sequence is that of 2,3-bisphosphoglycerate-independent phosphoglycerate mutase from Ehrlichia ruminantium (strain Gardel).